The primary structure comprises 456 residues: uncharacterized protein (456 aa).

11 consecutive transmembrane segments (helical) span residues 12–32 (SFIW…YLTL), 63–83 (FAAL…VGVA), 86–106 (VQAG…LGMA), 143–163 (WLAK…IGTF), 179–199 (IPVL…ILGG), 208–228 (SVIV…IILL), 237–257 (ILLI…AVGL), 305–325 (FLDT…TGAW), 348–368 (IGAT…ILGW), 390–410 (LAYI…IWII), and 414–434 (VNGL…KVII).

The protein belongs to the alanine or glycine:cation symporter (AGCS) (TC 2.A.25) family.

It localises to the cell inner membrane. This is an uncharacterized protein from Haemophilus influenzae (strain ATCC 51907 / DSM 11121 / KW20 / Rd).